The chain runs to 468 residues: Cytochrome bd ubiquinol oxidase subunit 1 (468 aa).

9 helical membrane passes run 15-35 (TLFH…VALM), 51-71 (AKFW…TGIL), 95-115 (LAIE…LWIF), 124-144 (IHAL…FWIL), 177-197 (LWVE…FFIA), 219-239 (LAMI…HMQA), 331-351 (FRIM…GLWL), 366-386 (IMIA…IMTE), and 416-436 (SIIA…FLFI). His18 is a binding site for heme b. Heme b is bound at residue His183. Met334 contacts heme b. The disordered stretch occupies residues 448–468 (HHDVPVSTDPFSQEVYHGISS).

This sequence belongs to the cytochrome ubiquinol oxidase subunit 1 family. Heterodimer of subunits I and II. The cofactor is heme b. Heme d cis-diol serves as cofactor.

It is found in the cell membrane. The catalysed reaction is 2 a ubiquinol + O2(in) + 4 H(+)(in) = 2 a ubiquinone + 2 H2O(in) + 4 H(+)(out). The protein is Cytochrome bd ubiquinol oxidase subunit 1 (cydA) of Bacillus subtilis (strain 168).